The following is a 208-amino-acid chain: 3-isopropylmalate dehydratase small subunit 2 (208 aa).

Positions Glu163–Ala208 are disordered.

Belongs to the LeuD family. LeuD type 2 subfamily. Heterodimer of LeuC and LeuD.

It catalyses the reaction (2R,3S)-3-isopropylmalate = (2S)-2-isopropylmalate. The protein operates within amino-acid biosynthesis; L-leucine biosynthesis; L-leucine from 3-methyl-2-oxobutanoate: step 2/4. In terms of biological role, catalyzes the isomerization between 2-isopropylmalate and 3-isopropylmalate, via the formation of 2-isopropylmaleate. This is 3-isopropylmalate dehydratase small subunit 2 (leuD2) from Deinococcus radiodurans (strain ATCC 13939 / DSM 20539 / JCM 16871 / CCUG 27074 / LMG 4051 / NBRC 15346 / NCIMB 9279 / VKM B-1422 / R1).